A 394-amino-acid polypeptide reads, in one-letter code: Methylthioribose kinase (394 aa).

ATP contacts are provided by residues Asn44, Lys61, and 115–117 (EDL). Asp233 lines the substrate pocket. Residue 250–252 (DPE) coordinates ATP. Arg337 provides a ligand contact to substrate.

It belongs to the methylthioribose kinase family. In terms of assembly, homodimer.

It catalyses the reaction 5-(methylsulfanyl)-D-ribose + ATP = 5-(methylsulfanyl)-alpha-D-ribose 1-phosphate + ADP + H(+). The protein operates within amino-acid biosynthesis; L-methionine biosynthesis via salvage pathway; S-methyl-5-thio-alpha-D-ribose 1-phosphate from S-methyl-5'-thioadenosine (hydrolase route): step 2/2. In terms of biological role, catalyzes the phosphorylation of methylthioribose into methylthioribose-1-phosphate. This is Methylthioribose kinase from Bacillus velezensis (strain DSM 23117 / BGSC 10A6 / LMG 26770 / FZB42) (Bacillus amyloliquefaciens subsp. plantarum).